The sequence spans 648 residues: UDP-galactose:fucoside alpha-3-galactosyltransferase (648 aa).

7 WD repeats span residues 320 to 358, 372 to 420, 422 to 461, 464 to 505, 507 to 546, 556 to 595, and 617 to 648; these read NHTD…GNDT, HKRG…IQTF, GHTG…FKRV, GHNG…NIIK, NQGG…NFND, NENS…NNNN, and HLNS…SWDL.

The protein belongs to the glycosyltransferase 77 family. It depends on Mn(2+) as a cofactor.

It is found in the cytoplasm. It catalyses the reaction an alpha-L-fucosyl-(1-&gt;2)-beta-D-galactosyl derivative + UDP-alpha-D-galactose = an alpha-D-galactosyl-(1-&gt;3)-[alpha-L-fucosyl-(1-&gt;2)]-beta-D-galactosyl derivative + UDP + H(+). It participates in protein modification; protein glycosylation. With respect to regulation, stimulated by dithiothreitol (DTT) in vitro. Totally inhibited by EDTA. Specifically catalyzes the transfer of a galactosyl residue to the hydroxyproline-linked saccharide on Skp1 protein (fpaA/fpaB). Catalyzes the formation of a Gal-alpha-1,3-Fuc linkage, leading to Gal-Fuc-Gal-GlcNAc-HyPro143-Skp1. This is UDP-galactose:fucoside alpha-3-galactosyltransferase (agtA) from Dictyostelium discoideum (Social amoeba).